The primary structure comprises 104 residues: L-rhamnose mutarotase (104 aa).

Tyrosine 18 lines the substrate pocket. Histidine 22 acts as the Proton donor in catalysis. Substrate is bound by residues tyrosine 41 and 76 to 77 (WW).

It belongs to the rhamnose mutarotase family. Homodimer.

The protein resides in the cytoplasm. The enzyme catalyses alpha-L-rhamnose = beta-L-rhamnose. It functions in the pathway carbohydrate metabolism; L-rhamnose metabolism. In terms of biological role, involved in the anomeric conversion of L-rhamnose. The polypeptide is L-rhamnose mutarotase (Lachnoclostridium phytofermentans (strain ATCC 700394 / DSM 18823 / ISDg) (Clostridium phytofermentans)).